A 526-amino-acid polypeptide reads, in one-letter code: Alpha-1,3-mannosyl-glycoprotein 4-beta-N-acetylglucosaminyltransferase A (526 aa).

The Cytoplasmic portion of the chain corresponds to 1 to 6; that stretch reads MRLRNG. The chain crosses the membrane as a helical; Signal-anchor for type II membrane protein span at residues 7 to 27; it reads TVATALVFVTSFLTLSWYTTW. Positions 28–63 form a coiled coil; that stretch reads QNGKEKLIAYQREFLALKERLRVAEHRISQRSSELN. The Lumenal segment spans residues 28-526; sequence QNGKEKLIAY…NEIHIKKVTS (499 aa). Asn-449 carries N-linked (GlcNAc...) asparagine glycosylation. Position 465 is a phosphoserine (Ser-465).

Belongs to the glycosyltransferase 54 family. Requires a divalent metal cation as cofactor. In terms of processing, N-glycosylated.

It localises to the golgi apparatus membrane. The protein localises to the secreted. The catalysed reaction is N(4)-{beta-D-GlcNAc-(1-&gt;2)-alpha-D-Man-(1-&gt;3)-[beta-D-GlcNAc-(1-&gt;2)-alpha-D-Man-(1-&gt;6)]-beta-D-Man-(1-&gt;4)-beta-D-GlcNAc-(1-&gt;4)-beta-D-GlcNAc}-L-asparaginyl-[protein] + UDP-N-acetyl-alpha-D-glucosamine = N(4)-{beta-D-GlcNAc-(1-&gt;2)-[beta-D-GlcNAc-(1-&gt;4)]-alpha-D-Man-(1-&gt;3)-[beta-D-GlcNAc-(1-&gt;2)-alpha-D-Man-(1-&gt;6)]-beta-D-Man-(1-&gt;4)-beta-D-GlcNAc-(1-&gt;4)-beta-D-GlcNAc}-L-asparaginyl-[protein] + UDP + H(+). The enzyme catalyses an N(4)-{beta-D-GlcNAc-(1-&gt;2)-alpha-D-Man-(1-&gt;3)-[alpha-D-Man-(1-&gt;6)]-beta-D-Man-(1-&gt;4)-beta-D-GlcNAc-(1-&gt;4)-beta-D-GlcNAc}-L-asparaginyl-[protein] + UDP-N-acetyl-alpha-D-glucosamine = an N(4)-{beta-D-GlcNAc-(1-&gt;2)-[beta-D-GlcNAc-(1-&gt;4)]-alpha-D-Man-(1-&gt;3)-[alpha-D-Man-(1-&gt;6)]-beta-D-Man-(1-&gt;4)-beta-D-GlcNAc-(1-&gt;4)-beta-D-GlcNAc}-L-asparaginyl-[protein] + UDP + H(+). It catalyses the reaction an N(4)-{beta-D-GlcNAc-(1-&gt;2)-alpha-D-Man-(1-&gt;3)-[beta-D-GlcNAc-(1-&gt;2)-[beta-D-GlcNAc-(1-&gt;6)]-alpha-D-Man-(1-&gt;6)]-beta-D-Man-(1-&gt;4)-beta-D-GlcNAc-(1-&gt;4)-beta-D-GlcNAc}-L-asparaginyl-[protein] + UDP-N-acetyl-alpha-D-glucosamine = an N(4)-{beta-D-GlcNAc-(1-&gt;2)-[beta-D-GlcNAc-(1-&gt;4)]-alpha-D-Man-(1-&gt;3)-[beta-D-GlcNAc-(1-&gt;2)-[beta-D-GlcNAc-(1-&gt;6)]-alpha-D-Man-(1-&gt;6)]-beta-D-Man-(1-&gt;4)-beta-D-GlcNAc-(1-&gt;4)-beta-D-GlcNAc}-L-asparaginyl-[protein] + UDP + H(+). It carries out the reaction an N(4)-{beta-D-GlcNAc-(1-&gt;2)-alpha-D-Man-(1-&gt;3)-[beta-D-GlcNAc-(1-&gt;2)-alpha-D-Man-(1-&gt;6)]-beta-D-Man-(1-&gt;4)-beta-D-GlcNAc-(1-&gt;4)-[alpha-L-Fuc-(1-&gt;6)]-beta-D-GlcNAc}-L-asparaginyl-[protein] + UDP-N-acetyl-alpha-D-glucosamine = N(4)-{beta-D-GlcNAc-(1-&gt;2)-[beta-D-GlcNAc-(1-&gt;4)]-alpha-D-Man-(1-&gt;3)-[beta-D-GlcNAc-(1-&gt;2)-alpha-D-Man-(1-&gt;6)]-beta-D-Man-(1-&gt;4)-beta-D-GlcNAc-(1-&gt;4)-[alpha-L-Fuc-(1-&gt;6)]-beta-D-GlcNAc}-asparaginyl-[protein] + UDP + H(+). The catalysed reaction is an N(4)-{beta-D-GlcNAc-(1-&gt;2)-alpha-D-Man-(1-&gt;3)-[beta-D-Gal-(1-&gt;4)-beta-D-GlcNAc-(1-&gt;2)-alpha-D-Man-(1-&gt;6)]-beta-D-Man-(1-&gt;4)-beta-D-GlcNAc-(1-&gt;4)-beta-D-GlcNAc}-L-asparaginyl-[protein] + UDP-N-acetyl-alpha-D-glucosamine = an N(4)-{beta-D-GlcNAc-(1-&gt;2)-[beta-D-GlcNAc-(1-&gt;4)]-alpha-D-Man-(1-&gt;3)-[beta-D-Gal-(1-&gt;4)-beta-D-GlcNAc-(1-&gt;2)-alpha-D-Man-(1-&gt;6)]-beta-D-Man-(1-&gt;4)-beta-D-GlcNAc-(1-&gt;4)-beta-D-GlcNAc}-L-asparaginyl-[protein] + UDP + H(+). The enzyme catalyses N(4)-{beta-D-GlcNAc-(1-&gt;2)-alpha-D-Man-(1-&gt;3)-[alpha-D-Man-(1-&gt;3)-{alpha-D-Man-(1-&gt;6)}-alpha-D-Man-(1-&gt;6)]-beta-D-Man-(1-&gt;4)-beta-D-GlcNAc-(1-&gt;4)-beta-D-GlcNAc}-asparaginyl-[protein] + UDP-N-acetyl-alpha-D-glucosamine = N(4)-{beta-D-GlcNAc-(1-&gt;2)-[beta-D-GlcNAc-(1-&gt;4)]-alpha-D-Man-(1-&gt;3)-[alpha-D-Man-(1-&gt;3)-{alpha-D-Man-(1-&gt;6)}-alpha-D-Man-(1-&gt;6)]-beta-D-Man-(1-&gt;4)-beta-D-GlcNAc-(1-&gt;4)-beta-D-GlcNAc}-asparaginyl-[protein] + UDP + H(+). It catalyses the reaction N(4)-{beta-D-GlcNAc-(1-&gt;2)-alpha-D-Man-(1-&gt;3)-beta-D-Man-(1-&gt;4)-beta-D-GlcNAc-(1-&gt;4)-beta-D-GlcNAc}-asparaginyl-[protein] + UDP-N-acetyl-alpha-D-glucosamine = N(4)-{beta-D-GlcNAc-(1-&gt;2)-[beta-D-GlcNAc-(1-&gt;4)]-alpha-D-Man-(1-&gt;3)-beta-D-Man-(1-&gt;4)-beta-D-GlcNAc-(1-&gt;4)-beta-D-GlcNAc}-asparaginyl-[protein] + UDP + H(+). It participates in protein modification; protein glycosylation. Its activity is regulated as follows. Inhibited by UDP. Its function is as follows. Glycosyltransferase that catalyze the transfer of GlcNAc from UDP-GlcNAc to the GlcNAcbeta1-2Manalpha1-3 arm of the core structure of N-linked glycans through a beta1-4 linkage and participates in the production of tri- and tetra-antennary N-linked sugar chains. Involved in glucose transport by mediating SLC2A2/GLUT2 glycosylation, thereby controlling cell-surface expression of SLC2A2 in pancreatic beta cells. The polypeptide is Alpha-1,3-mannosyl-glycoprotein 4-beta-N-acetylglucosaminyltransferase A (Rattus norvegicus (Rat)).